The following is a 428-amino-acid chain: Trigger factor (428 aa).

In terms of domain architecture, PPIase FKBP-type spans 163–248; it reads GDTAVIDFEG…VHEIKEKRLP (86 aa).

Belongs to the FKBP-type PPIase family. Tig subfamily.

It is found in the cytoplasm. It carries out the reaction [protein]-peptidylproline (omega=180) = [protein]-peptidylproline (omega=0). Its function is as follows. Involved in protein export. Acts as a chaperone by maintaining the newly synthesized protein in an open conformation. Functions as a peptidyl-prolyl cis-trans isomerase. The sequence is that of Trigger factor from Geobacillus sp. (strain WCH70).